The chain runs to 159 residues: U-actitoxin-Avd13a/b (159 aa).

Positions 1 to 18 (MKSIFLVFFAVCLVKAEA) are cleaved as a signal peptide. Positions 19-26 (GKGRKREP) are excised as a propeptide. Disulfide bonds link C33/C45 and C36/C52. Residues 59–60 (EP) constitute a propeptide that is removed on maturation. Disulfide bonds link C67–C79 and C70–C86. Residues 93 to 94 (EP) constitute a propeptide that is removed on maturation. Cystine bridges form between C101-C113 and C104-C120. Residues 127–128 (EP) constitute a propeptide that is removed on maturation. Intrachain disulfides connect C135–C147 and C138–C154.

Belongs to the sea anemone BBH family.

The protein localises to the secreted. It is found in the nematocyst. Its function is as follows. Inhibits ion channels. The polypeptide is U-actitoxin-Avd13a/b (Anemonia viridis (Snakelocks anemone)).